Consider the following 72-residue polypeptide: Translation initiation factor IF-1 (72 aa).

In terms of domain architecture, S1-like spans 1–72 (MAKKDVIELE…TRGRITWRKK (72 aa)).

It belongs to the IF-1 family. As to quaternary structure, component of the 30S ribosomal translation pre-initiation complex which assembles on the 30S ribosome in the order IF-2 and IF-3, IF-1 and N-formylmethionyl-tRNA(fMet); mRNA recruitment can occur at any time during PIC assembly.

It localises to the cytoplasm. Its function is as follows. One of the essential components for the initiation of protein synthesis. Stabilizes the binding of IF-2 and IF-3 on the 30S subunit to which N-formylmethionyl-tRNA(fMet) subsequently binds. Helps modulate mRNA selection, yielding the 30S pre-initiation complex (PIC). Upon addition of the 50S ribosomal subunit IF-1, IF-2 and IF-3 are released leaving the mature 70S translation initiation complex. This chain is Translation initiation factor IF-1, found in Clostridioides difficile (strain 630) (Peptoclostridium difficile).